The sequence spans 1461 residues: Formin-3 (1461 aa).

Disordered stretches follow at residues 1–67 and 431–457; these read MASK…SDDN and YREE…RPTT. Over residues 12–28 the composition is skewed to low complexity; sequence TSRSIQSRNSSYSTSSN. Composition is skewed to polar residues over residues 29 to 53 and 438 to 457; these read ERIG…STND and PHGN…RPTT. Residues 92-508 form the GBD/FH3 domain; sequence SETEQLRKIY…KIQKSMQLLT (417 aa). The interaction with tea4 stretch occupies residues 137–515; that stretch reads QHTVLDEATY…LLTHTLEALE (379 aa). The stretch at 540 to 639 forms a coiled coil; that stretch reads GTAEEIAEYK…VQNSNEQHLQ (100 aa). Residues 683–811 form a disordered region; that stretch reads GIPVRVHTPS…EPKIDETSLT (129 aa). Residues 700 to 718 are compositionally biased toward low complexity; sequence SFSGSEISSSPSPLLPDVS. Over residues 731-784 the composition is skewed to pro residues; the sequence is SPPPPPPAVIVPTPAPAPIPVPPPAPIMGGPPPPPPPPGVAGAGPPPPPPPPPA. Basic and acidic residues predominate over residues 801–811; the sequence is PEPKIDETSLT. The 413-residue stretch at 845–1257 folds into the FH2 domain; the sequence is LRDLHKPTRP…RIMSEDRDKL (413 aa). 2 disordered regions span residues 1268–1337 and 1416–1461; these read AKYR…AEEK and ERLQ…RQKQ. 2 stretches are compositionally biased toward basic and acidic residues: residues 1273–1315 and 1325–1337; these read KREL…KTGD and MEDL…AEEK. Residues 1445–1454 are compositionally biased toward polar residues; sequence TNGSNASNLV.

Belongs to the formin homology family. In terms of assembly, interacts with rax2, rho3 and tea4. Interacts with tea1 in the presence of tea4.

The protein localises to the cytoplasm. Its subcellular location is the cell cortex. It is found in the cell tip. Functionally, involved in controlling polarized cell growth. Required for interphase actin cable formation and microtubule organization. In Schizosaccharomyces pombe (strain 972 / ATCC 24843) (Fission yeast), this protein is Formin-3 (for3).